We begin with the raw amino-acid sequence, 212 residues long: Telomere repeats-binding bouquet formation protein 2 (212 aa).

Belongs to the TERB2 family. In terms of assembly, component of the MAJIN-TERB1-TERB2 complex.

Functionally, meiosis-specific telomere-associated protein involved in meiotic telomere attachment to the nucleus inner membrane, a crucial step for homologous pairing and synapsis. Component of the MAJIN-TERB1-TERB2 complex, which promotes telomere cap exchange by mediating attachment of telomeric DNA to the inner nuclear membrane and replacement of the protective cap of telomeric chromosomes: in early meiosis, the MAJIN-TERB1-TERB2 complex associates with telomeric DNA and the shelterin/telosome complex. During prophase, the complex matures and promotes release of the shelterin/telosome complex from telomeric DNA. The chain is Telomere repeats-binding bouquet formation protein 2 from Danio rerio (Zebrafish).